A 594-amino-acid polypeptide reads, in one-letter code: MPPINTPRRSDSAISVRSLHSESSMSLRSTFSLPEEEEEPEPLVFAEQPSVKLCCQLCCSVFKDPVITTCGHTFCRRCALKSEKCPVDNAKLTVVVNNIAVAEQIGELFIHCRHGCHAAGTGKPGVFEVDPRGCPFTIKLSARKDHESSCDYRPVRCPNNPSCPPLLKMNLEAHLKECEHIKCPHSKYGCTFIGNQDTYETHLETCRFEGLKEFLQQTDDRFHEMHVALAQKDQEIAFLRSMLGKLSEKIDQLEKSLELKFDVLDENQSKLSEDLMEFRRDASMLNDELSHINARLNMGILGSYDPQQIFKCKGTFVGHQGPVWCLCVYSMGDLLFSGSSDKTIKVWDTCTTYKCQKTLEGHDGIVLALCIQGCKLYSGSADCTIIVWDIQNLQKVNTIRAHDNPVCTLVSSHNMLFSGSLKAIKVWDIVGTELKLKKELTGLNHWVRALVAAQSYLYSGSYQTIKIWDIRTLDCIHVLQTSGGSVYSIAVTNHHIVCGTYENLIHVWDIESKEQVRTLTGHVGTVYALAVISTPDQTKVFSASYDRSLRVWSMDNMICTQTLLRHQGSVTALAVSRGRLFSGAVDSTVKVWTC.

A disordered region spans residues 1 to 33; it reads MPPINTPRRSDSAISVRSLHSESSMSLRSTFSL. A phosphoserine mark is found at serine 12 and serine 15. Positions 15 to 29 are enriched in low complexity; the sequence is SVRSLHSESSMSLRS. An RING-type zinc finger spans residues 55-89; that stretch reads CQLCCSVFKDPVITTCGHTFCRRCALKSEKCPVDN. A TRAF-type zinc finger spans residues 146–216; sequence HESSCDYRPV…RFEGLKEFLQ (71 aa). 7 WD repeats span residues 318-357, 361-398, 401-437, 439-478, 481-518, 521-562, and 565-593; these read GHQG…KCQK, GHDG…KVNT, AHDN…LKLK, ELTG…CIHV, TSGG…QVRT, GHVG…CTQT, and RHQG…KVWT.

Belongs to the WD repeat TRAF7 family. As to quaternary structure, homodimer. Interacts with MAP3K3 and promotes the kinase activity of this enzyme. Phosphorylated by MAP3K3. In terms of processing, ubiquitinates itself upon phosphorylation. In terms of tissue distribution, ubiquitously expressed. Expression is relatively high in heart, liver, kidney, testis, prostate, thyroid, and salivary gland.

It localises to the cytoplasmic vesicle. It is found in the cytoplasm. Its subcellular location is the nucleus. It catalyses the reaction S-ubiquitinyl-[E2 ubiquitin-conjugating enzyme]-L-cysteine + [acceptor protein]-L-lysine = [E2 ubiquitin-conjugating enzyme]-L-cysteine + N(6)-ubiquitinyl-[acceptor protein]-L-lysine.. It participates in protein modification; protein ubiquitination. Its function is as follows. E3 ubiquitin and SUMO-protein ligase that plays a role in different biological processes such as innate immunity, inflammation or apoptosis. Potentiates MAP3K3-mediated activation of the NF-kappa-B, JUN/AP1 and DDIT3 transcriptional regulators. Negatively regulates MYB transcriptional activity by sequestering it to the cytosol via SUMOylation. Plays a role in the phosphorylation of MAPK1 and/or MAPK3, probably via its interaction with MAP3K3. Negatively regulates RLR-mediated innate immunity by promoting 'Lys-48'-linked ubiquitination of TBK1 through its RING domain to inhibit the cellular antiviral response. Promotes 'Lys-29'-linked polyubiquitination of NEMO/IKBKG and RELA leading to targeting these two proteins to lysosomal degradative pathways, reducing the transcriptional activity of NF-kappa-B. This chain is E3 ubiquitin-protein ligase TRAF7, found in Mus musculus (Mouse).